The chain runs to 453 residues: Tubulin beta-2 chain (453 aa).

Residues Gln-11, Glu-71, Ser-140, Gly-144, Thr-145, Gly-146, Asn-206, and Asn-228 each coordinate GTP. Glu-71 serves as a coordination point for Mg(2+).

Belongs to the tubulin family. In terms of assembly, dimer of alpha and beta chains. A typical microtubule is a hollow water-filled tube with an outer diameter of 25 nm and an inner diameter of 15 nM. Alpha-beta heterodimers associate head-to-tail to form protofilaments running lengthwise along the microtubule wall with the beta-tubulin subunit facing the microtubule plus end conferring a structural polarity. Microtubules usually have 13 protofilaments but different protofilament numbers can be found in some organisms and specialized cells. The cofactor is Mg(2+).

The protein resides in the cytoplasm. Its subcellular location is the cytoskeleton. In terms of biological role, tubulin is the major constituent of microtubules, a cylinder consisting of laterally associated linear protofilaments composed of alpha- and beta-tubulin heterodimers. Microtubules grow by the addition of GTP-tubulin dimers to the microtubule end, where a stabilizing cap forms. Below the cap, tubulin dimers are in GDP-bound state, owing to GTPase activity of alpha-tubulin. The chain is Tubulin beta-2 chain from Geotrichum candidum (Oospora lactis).